Reading from the N-terminus, the 465-residue chain is E3 ubiquitin-protein ligase ORTHRUS-LIKE 1 (465 aa).

The disordered stretch occupies residues 31 to 69 (TSLSSPLDRSGDVDPLPVSDESGGSKADESMTDADETKK). Residues 109 to 148 (CSLCNQLPDRPVTILCGHNFCLKCFDKWIDQGNQICATCR) form an RING-type zinc finger. Residues 233–374 (VRNQGVLVGE…FKVCRYLFVR (142 aa)) enclose the YDG domain. Residues 442-462 (MAMTCLLLFVLIILVGSSSIL) traverse the membrane as a helical segment.

It localises to the nucleus. It is found in the membrane. It carries out the reaction S-ubiquitinyl-[E2 ubiquitin-conjugating enzyme]-L-cysteine + [acceptor protein]-L-lysine = [E2 ubiquitin-conjugating enzyme]-L-cysteine + N(6)-ubiquitinyl-[acceptor protein]-L-lysine.. Its pathway is protein modification; protein ubiquitination. E3 ubiquitin-protein ligase. May participate in methylation-dependent transcriptional regulation. Mediates ubiquitination with the E2 ubiquitin-conjugating enzyme UBC11. This chain is E3 ubiquitin-protein ligase ORTHRUS-LIKE 1 (ORTHL), found in Arabidopsis thaliana (Mouse-ear cress).